Reading from the N-terminus, the 303-residue chain is Protein REVEILLE 5 (303 aa).

In terms of domain architecture, HTH myb-type spans 54–108; sequence TIKKSRENWTDQEHDKFLEALHLFDRDWKKIEAFVGSKTVVQIRSHAQKYFLKVQ. The H-T-H motif DNA-binding region spans 81-104; it reads WKKIEAFVGSKTVVQIRSHAQKYF. A disordered region spans residues 109-130; the sequence is KSGANEHLPPPRPKRKASHPYP.

The protein localises to the nucleus. Functionally, probable transcription factor. In Arabidopsis thaliana (Mouse-ear cress), this protein is Protein REVEILLE 5 (RVE5).